Consider the following 277-residue polypeptide: Diaminopimelate epimerase (277 aa).

Substrate is bound by residues Asn13, Gln46, and Asn66. The Proton donor role is filled by Cys75. Residues 76–77, Asn159, Asn192, and 210–211 contribute to the substrate site; these read GN and ER. Cys219 (proton acceptor) is an active-site residue. Residue 220–221 participates in substrate binding; sequence GT.

This sequence belongs to the diaminopimelate epimerase family. In terms of assembly, homodimer.

It is found in the cytoplasm. The enzyme catalyses (2S,6S)-2,6-diaminopimelate = meso-2,6-diaminopimelate. It functions in the pathway amino-acid biosynthesis; L-lysine biosynthesis via DAP pathway; DL-2,6-diaminopimelate from LL-2,6-diaminopimelate: step 1/1. Its function is as follows. Catalyzes the stereoinversion of LL-2,6-diaminopimelate (L,L-DAP) to meso-diaminopimelate (meso-DAP), a precursor of L-lysine and an essential component of the bacterial peptidoglycan. The protein is Diaminopimelate epimerase of Azoarcus sp. (strain BH72).